A 394-amino-acid polypeptide reads, in one-letter code: A-type flagellin (394 aa).

The protein belongs to the bacterial flagellin family. In terms of processing, phosphorylated on tyrosine residue(s). Post-translationally, flagellin from strain 5939 but not from strain 170018 is glycosylated.

Its subcellular location is the secreted. The protein localises to the bacterial flagellum. Its function is as follows. Flagellin is the subunit protein which polymerizes to form the filaments of bacterial flagella. The polypeptide is A-type flagellin (fliC) (Pseudomonas aeruginosa).